The primary structure comprises 1001 residues: RNA-binding protein 12B (1001 aa).

3 positions are modified to phosphoserine: Ser-98, Ser-101, and Ser-112. Residue Lys-114 forms a Glycyl lysine isopeptide (Lys-Gly) (interchain with G-Cter in SUMO2) linkage. Over residues Asn-119–Gln-128 the composition is skewed to polar residues. Residues Asn-119–Thr-147 are disordered. Residue Lys-151 forms a Glycyl lysine isopeptide (Lys-Gly) (interchain with G-Cter in SUMO2) linkage. The 76-residue stretch at Pro-155 to Glu-230 folds into the RRM 1 domain. Over residues Leu-247–Arg-262 the composition is skewed to basic and acidic residues. Positions Leu-247–Ser-278 are disordered. Phosphoserine is present on residues Ser-250 and Ser-254. Residues His-263–Ser-278 are compositionally biased toward basic residues. Residue Thr-276 is modified to Phosphothreonine. 4 positions are modified to phosphoserine: Ser-278, Ser-280, Ser-292, and Ser-294. An RRM 2 domain is found at Phe-284–Arg-360. Lys-319 bears the N6-acetyllysine mark. Lys-335 participates in a covalent cross-link: Glycyl lysine isopeptide (Lys-Gly) (interchain with G-Cter in SUMO2). Ser-377 bears the Phosphoserine mark. The RRM 3 domain occupies Leu-400–Glu-477. Glycyl lysine isopeptide (Lys-Gly) (interchain with G-Cter in SUMO2) cross-links involve residues Lys-514 and Lys-541. The segment at Gln-544–Phe-587 is disordered. 3 positions are modified to phosphoserine: Ser-575, Ser-591, and Ser-638. The segment covering Leu-631–Ser-881 has biased composition (basic and acidic residues). Residues Leu-631–His-882 form a disordered region. A Phosphothreonine modification is found at Thr-640. 2 positions are modified to phosphoserine: Ser-710 and Ser-718. Lys-895 participates in a covalent cross-link: Glycyl lysine isopeptide (Lys-Gly) (interchain with G-Cter in SUMO2). The 77-residue stretch at Thr-925–Leu-1001 folds into the RRM 4 domain.

The sequence is that of RNA-binding protein 12B (RBM12B) from Homo sapiens (Human).